The sequence spans 150 residues: UPF0208 membrane protein VIBHAR_02941 (150 aa).

2 helical membrane passes run 42-62 (FGIK…MAFN) and 70-90 (AIVV…WLGS).

Belongs to the UPF0208 family.

It is found in the cell inner membrane. The polypeptide is UPF0208 membrane protein VIBHAR_02941 (Vibrio campbellii (strain ATCC BAA-1116)).